Here is a 393-residue protein sequence, read N- to C-terminus: 1-deoxy-D-xylulose 5-phosphate reductoisomerase (393 aa).

NADPH-binding residues include T10, G11, S12, I13, R37, Q38, and N124. Residue K125 coordinates 1-deoxy-D-xylulose 5-phosphate. E126 is an NADPH binding site. D150 contacts Mn(2+). The 1-deoxy-D-xylulose 5-phosphate site is built by S151, E152, S179, and H202. Residue E152 participates in Mn(2+) binding. An NADPH-binding site is contributed by G208. 1-deoxy-D-xylulose 5-phosphate-binding residues include S215, N220, K221, and E224. A Mn(2+)-binding site is contributed by E224.

Belongs to the DXR family. The cofactor is Mg(2+). Mn(2+) serves as cofactor.

It catalyses the reaction 2-C-methyl-D-erythritol 4-phosphate + NADP(+) = 1-deoxy-D-xylulose 5-phosphate + NADPH + H(+). The protein operates within isoprenoid biosynthesis; isopentenyl diphosphate biosynthesis via DXP pathway; isopentenyl diphosphate from 1-deoxy-D-xylulose 5-phosphate: step 1/6. In terms of biological role, catalyzes the NADPH-dependent rearrangement and reduction of 1-deoxy-D-xylulose-5-phosphate (DXP) to 2-C-methyl-D-erythritol 4-phosphate (MEP). The protein is 1-deoxy-D-xylulose 5-phosphate reductoisomerase of Cupriavidus necator (strain ATCC 17699 / DSM 428 / KCTC 22496 / NCIMB 10442 / H16 / Stanier 337) (Ralstonia eutropha).